A 472-amino-acid polypeptide reads, in one-letter code: Glutamate--tRNA ligase (472 aa).

The 'HIGH' region motif lies at 10 to 20; sequence PSPTGYLHVGG. Cys99, Cys101, Cys126, and Asp128 together coordinate Zn(2+). Positions 238 to 242 match the 'KMSKS' region motif; it reads KLSKR. Lys241 is a binding site for ATP.

This sequence belongs to the class-I aminoacyl-tRNA synthetase family. Glutamate--tRNA ligase type 1 subfamily. In terms of assembly, monomer. Requires Zn(2+) as cofactor.

Its subcellular location is the cytoplasm. It carries out the reaction tRNA(Glu) + L-glutamate + ATP = L-glutamyl-tRNA(Glu) + AMP + diphosphate. Functionally, catalyzes the attachment of glutamate to tRNA(Glu) in a two-step reaction: glutamate is first activated by ATP to form Glu-AMP and then transferred to the acceptor end of tRNA(Glu). In Photorhabdus laumondii subsp. laumondii (strain DSM 15139 / CIP 105565 / TT01) (Photorhabdus luminescens subsp. laumondii), this protein is Glutamate--tRNA ligase.